Consider the following 288-residue polypeptide: Pantothenate synthetase (288 aa).

An ATP-binding site is contributed by 31–38 (MGNLHRGH). The active-site Proton donor is the His38. Gln62 contributes to the (R)-pantoate binding site. Gln62 contributes to the beta-alanine binding site. 150-153 (GQKD) is an ATP binding site. (R)-pantoate is bound at residue Gln156. ATP is bound by residues Ile179 and 187-190 (LSSR).

Belongs to the pantothenate synthetase family. In terms of assembly, homodimer.

The protein localises to the cytoplasm. The catalysed reaction is (R)-pantoate + beta-alanine + ATP = (R)-pantothenate + AMP + diphosphate + H(+). The protein operates within cofactor biosynthesis; (R)-pantothenate biosynthesis; (R)-pantothenate from (R)-pantoate and beta-alanine: step 1/1. In terms of biological role, catalyzes the condensation of pantoate with beta-alanine in an ATP-dependent reaction via a pantoyl-adenylate intermediate. The protein is Pantothenate synthetase of Wigglesworthia glossinidia brevipalpis.